Consider the following 155-residue polypeptide: uncharacterized protein (155 aa).

Residues 7 to 154 (LQINYKTLEE…VWLPESVELQ (148 aa)) enclose the N-acetyltransferase domain.

This is an uncharacterized protein from Brevibacillus brevis (strain 47 / JCM 6285 / NBRC 100599).